The following is a 243-amino-acid chain: Ribonuclease PH (243 aa).

Phosphate-binding positions include Arg-91 and 129 to 131 (GTR).

The protein belongs to the RNase PH family. In terms of assembly, homohexameric ring arranged as a trimer of dimers.

It carries out the reaction tRNA(n+1) + phosphate = tRNA(n) + a ribonucleoside 5'-diphosphate. Its function is as follows. Phosphorolytic 3'-5' exoribonuclease that plays an important role in tRNA 3'-end maturation. Removes nucleotide residues following the 3'-CCA terminus of tRNAs; can also add nucleotides to the ends of RNA molecules by using nucleoside diphosphates as substrates, but this may not be physiologically important. Probably plays a role in initiation of 16S rRNA degradation (leading to ribosome degradation) during starvation. The chain is Ribonuclease PH from Burkholderia thailandensis (strain ATCC 700388 / DSM 13276 / CCUG 48851 / CIP 106301 / E264).